Consider the following 930-residue polypeptide: Translation initiation factor IF-2 (930 aa).

The segment covering 50–67 has biased composition (low complexity); sequence FKPAAAPKVEAKPAAPKV. 2 disordered regions span residues 50 to 196 and 260 to 346; these read FKPA…RIDF and EVVP…HELP. Composition is skewed to basic and acidic residues over residues 68-90 and 110-125; these read SAEK…EAKP and FKAE…AERR. Residues 129-141 are compositionally biased toward low complexity; that stretch reads KGNNRDQQQNGNR. Basic and acidic residues-rich tracts occupy residues 157–172 and 262–295; these read RDNR…EQGQ and VPEK…DGPR. A compositionally biased stretch (low complexity) spans 309–318; that stretch reads NQKNSNWNNN. Basic and acidic residues predominate over residues 337–346; that stretch reads VTERKFHELP. Residues 432-599 form the tr-type G domain; the sequence is ERPPVVTIMG…TVLLVAEIQE (168 aa). Residues 441–448 are G1; sequence GHVDHGKT. 441–448 contributes to the GTP binding site; the sequence is GHVDHGKT. The G2 stretch occupies residues 466–470; that stretch reads GITQH. The tract at residues 487–490 is G3; that stretch reads DTPG. Residues 487–491 and 541–544 each bind GTP; these read DTPGH and NKID. The G4 stretch occupies residues 541–544; that stretch reads NKID. Residues 577–579 form a G5 region; sequence SAK.

Belongs to the TRAFAC class translation factor GTPase superfamily. Classic translation factor GTPase family. IF-2 subfamily.

It localises to the cytoplasm. Its function is as follows. One of the essential components for the initiation of protein synthesis. Protects formylmethionyl-tRNA from spontaneous hydrolysis and promotes its binding to the 30S ribosomal subunits. Also involved in the hydrolysis of GTP during the formation of the 70S ribosomal complex. The polypeptide is Translation initiation factor IF-2 (Streptococcus pneumoniae serotype 19F (strain G54)).